We begin with the raw amino-acid sequence, 78 residues long: uncharacterized protein (78 aa).

Residues 56–66 (ERANAGKRVSE) show a composition bias toward basic and acidic residues. A disordered region spans residues 56-78 (ERANAGKRVSEEEQINGKRKRKD).

This is an uncharacterized protein from Saccharomyces cerevisiae (strain ATCC 204508 / S288c) (Baker's yeast).